A 608-amino-acid chain; its full sequence is Malonate--CoA ligase (608 aa).

This sequence belongs to the ATP-dependent AMP-binding enzyme family. Expressed in flowers.

The protein localises to the cytoplasm. It localises to the nucleus. It catalyses the reaction malonate + ATP + CoA = malonyl-CoA + AMP + diphosphate. Malonate--CoA ligase that catalyzes the formation of malonyl-CoA directly from malonate and CoA. May be required for the detoxification of malonate. This is Malonate--CoA ligase (AAE13) from Arabidopsis thaliana (Mouse-ear cress).